The chain runs to 412 residues: ATP phosphoribosyltransferase regulatory subunit (412 aa).

It belongs to the class-II aminoacyl-tRNA synthetase family. HisZ subfamily. Heteromultimer composed of HisG and HisZ subunits.

The protein resides in the cytoplasm. Its pathway is amino-acid biosynthesis; L-histidine biosynthesis; L-histidine from 5-phospho-alpha-D-ribose 1-diphosphate: step 1/9. In terms of biological role, required for the first step of histidine biosynthesis. May allow the feedback regulation of ATP phosphoribosyltransferase activity by histidine. The protein is ATP phosphoribosyltransferase regulatory subunit of Dehalococcoides mccartyi (strain ATCC BAA-2100 / JCM 16839 / KCTC 5957 / BAV1).